Consider the following 252-residue polypeptide: 2-succinyl-6-hydroxy-2,4-cyclohexadiene-1-carboxylate synthase (252 aa).

It belongs to the AB hydrolase superfamily. MenH family. As to quaternary structure, monomer.

The catalysed reaction is 5-enolpyruvoyl-6-hydroxy-2-succinyl-cyclohex-3-ene-1-carboxylate = (1R,6R)-6-hydroxy-2-succinyl-cyclohexa-2,4-diene-1-carboxylate + pyruvate. It functions in the pathway quinol/quinone metabolism; 1,4-dihydroxy-2-naphthoate biosynthesis; 1,4-dihydroxy-2-naphthoate from chorismate: step 3/7. The protein operates within quinol/quinone metabolism; menaquinone biosynthesis. Catalyzes a proton abstraction reaction that results in 2,5-elimination of pyruvate from 2-succinyl-5-enolpyruvyl-6-hydroxy-3-cyclohexene-1-carboxylate (SEPHCHC) and the formation of 2-succinyl-6-hydroxy-2,4-cyclohexadiene-1-carboxylate (SHCHC). This chain is 2-succinyl-6-hydroxy-2,4-cyclohexadiene-1-carboxylate synthase, found in Salmonella typhimurium (strain LT2 / SGSC1412 / ATCC 700720).